A 250-amino-acid polypeptide reads, in one-letter code: N-acyl homoserine lactonase (250 aa).

Residues H104, H106, D108, H109, H169, D191, and H235 each contribute to the Zn(2+) site.

It belongs to the metallo-beta-lactamase superfamily. Monomer. Zn(2+) serves as cofactor.

The catalysed reaction is an N-acyl-L-homoserine lactone + H2O = an N-acyl-L-homoserine + H(+). Completely inhibited by Cu(2+) and Ag(+). Partially inhibited by Cr(2+), Pb(2+) and Fe(2+). Mg(2+), Ca(2+), Mn(2+), Co(2+), Ni(2+), Zn(2+) and Cd(2+) have no effect on activity. The chelating agents EDTA, 2,2'bipyridine and o-phenanthroline have no effect on enzyme activity. Hydrolyzes acyl homoserine lactones with varying lengths of acyl chains, with a slight preference for substrates without 3-oxo substitution at the C3 position. Has only residual activity towards non-acyl lactones, and no activity towards non-cyclic esters. This is N-acyl homoserine lactonase from Bacillus sp.